Here is a 207-residue protein sequence, read N- to C-terminus: Ras-related protein Rab7A (207 aa).

Residues 15 to 22, 63 to 67, and 125 to 128 each bind GTP; these read GDSGVGKT, DTAGQ, and NKID. 2 S-geranylgeranyl cysteine lipidation sites follow: C205 and C207. C207 bears the Cysteine methyl ester mark.

The protein belongs to the small GTPase superfamily. Rab family.

The protein resides in the cell membrane. In terms of biological role, protein transport. Probably involved in vesicular traffic. This chain is Ras-related protein Rab7A, found in Mesembryanthemum crystallinum (Common ice plant).